Here is a 119-residue protein sequence, read N- to C-terminus: ATP-dependent Clp protease adapter protein ClpS (119 aa).

Positions 1 to 29 are disordered; that stretch reads MICPPGENKSMAERKQGGQGNGVGSSVVT.

Belongs to the ClpS family. As to quaternary structure, binds to the N-terminal domain of the chaperone ClpA.

Involved in the modulation of the specificity of the ClpAP-mediated ATP-dependent protein degradation. The chain is ATP-dependent Clp protease adapter protein ClpS from Caulobacter vibrioides (strain ATCC 19089 / CIP 103742 / CB 15) (Caulobacter crescentus).